A 347-amino-acid polypeptide reads, in one-letter code: Protein RecA (347 aa).

67 to 74 (GPESSGKT) is an ATP binding site.

It belongs to the RecA family.

It localises to the cytoplasm. Functionally, can catalyze the hydrolysis of ATP in the presence of single-stranded DNA, the ATP-dependent uptake of single-stranded DNA by duplex DNA, and the ATP-dependent hybridization of homologous single-stranded DNAs. It interacts with LexA causing its activation and leading to its autocatalytic cleavage. The polypeptide is Protein RecA (Helicobacter pylori (strain HPAG1)).